We begin with the raw amino-acid sequence, 101 residues long: Urease subunit beta (101 aa).

This sequence belongs to the urease beta subunit family. Heterotrimer of UreA (gamma), UreB (beta) and UreC (alpha) subunits. Three heterotrimers associate to form the active enzyme.

The protein localises to the cytoplasm. It catalyses the reaction urea + 2 H2O + H(+) = hydrogencarbonate + 2 NH4(+). It participates in nitrogen metabolism; urea degradation; CO(2) and NH(3) from urea (urease route): step 1/1. The chain is Urease subunit beta from Jannaschia sp. (strain CCS1).